The sequence spans 89 residues: Small ribosomal subunit protein uS14A (89 aa).

Belongs to the universal ribosomal protein uS14 family. Part of the 30S ribosomal subunit. Contacts proteins S3 and S10.

Its function is as follows. Binds 16S rRNA, required for the assembly of 30S particles and may also be responsible for determining the conformation of the 16S rRNA at the A site. This chain is Small ribosomal subunit protein uS14A, found in Staphylococcus saprophyticus subsp. saprophyticus (strain ATCC 15305 / DSM 20229 / NCIMB 8711 / NCTC 7292 / S-41).